A 298-amino-acid chain; its full sequence is Cyclic dof factor 1 (298 aa).

The interval 27-46 (EEEEKNQNKTLTDQSEKDKT) is disordered. Residues 54–108 (LPCPRCNSMETKFCYYNNYNVNQPRHFCKACQRYWTSGGTMRSVPIGAGRRKNKN) form a Dof-type zinc finger. Cysteine 56, cysteine 59, cysteine 81, and cysteine 84 together coordinate Zn(2+). Residues 200–231 (SSSPTSTLGKHSRDEDETVKQKQRNGSVLVPK) are disordered. Residues 210–219 (HSRDEDETVK) are compositionally biased toward basic and acidic residues.

As to quaternary structure, interacts with ADO2 (via kelch repeats), ADO3 (via kelch repeats) and GI (via N-terminus). Post-translationally, ubiquitinated. As to expression, expressed in the vascular tissues of cotyledons, leaves and hypocotyls and in stomata. Not detected in roots.

It localises to the nucleus. Its function is as follows. Transcription factor that binds specifically to a 5'-AA[AG]G-3' consensus core sequence. A flanking TGT sequence contributes to the specificity of binding. Regulates a photoperiodic flowering response. Transcriptional repressor of 'CONSTANS' expression. The DNA-binding ability is not modulated by 'GIGANTEA' but the stability of CDF1 is controlled by the proteasome-dependent pathway. Ubiquitinated by the SCF(ADO3) E3 ubiquitin ligase complex. Binds to the FT promoter in the morning. The polypeptide is Cyclic dof factor 1 (CDF1) (Arabidopsis thaliana (Mouse-ear cress)).